Here is a 583-residue protein sequence, read N- to C-terminus: Cell division protein FtsZ (583 aa).

GTP-binding positions include 24–28 (GGGGN), 111–113 (GTG), Glu142, Arg146, and Asp190. 2 disordered regions span residues 391-425 (HQQPSQDFRPQSKLFASSPAEAPAALRPAQPVQQA) and 510-583 (TNSL…RQSN). Over residues 412–425 (APAALRPAQPVQQA) the composition is skewed to low complexity.

The protein belongs to the FtsZ family. In terms of assembly, homodimer. Polymerizes to form a dynamic ring structure in a strictly GTP-dependent manner. Interacts directly with several other division proteins.

The protein localises to the cytoplasm. In terms of biological role, essential cell division protein that forms a contractile ring structure (Z ring) at the future cell division site. The regulation of the ring assembly controls the timing and the location of cell division. One of the functions of the FtsZ ring is to recruit other cell division proteins to the septum to produce a new cell wall between the dividing cells. Binds GTP and shows GTPase activity. The protein is Cell division protein FtsZ of Rhizobium radiobacter (Agrobacterium tumefaciens).